A 260-amino-acid polypeptide reads, in one-letter code: Global transcriptional regulator CodY (260 aa).

The tract at residues 1–159 (MPNLLEKTRK…SSTVVGIQLL (159 aa)) is GAF domain. The H-T-H motif DNA-binding region spans 207 to 226 (ASVIADRIGITRSVIVNALR).

The protein belongs to the CodY family.

Its subcellular location is the cytoplasm. DNA-binding global transcriptional regulator which is involved in the adaptive response to starvation and acts by directly or indirectly controlling the expression of numerous genes in response to nutrient availability. During rapid exponential growth, CodY is highly active and represses genes whose products allow adaptation to nutrient depletion. This is Global transcriptional regulator CodY from Streptococcus equi subsp. equi (strain 4047).